An 899-amino-acid polypeptide reads, in one-letter code: Protein translocase subunit SecA (899 aa).

Residues glutamine 89, 107 to 111 (GEGKT), and aspartate 502 contribute to the ATP site. Zn(2+) is bound by residues cysteine 882, cysteine 884, cysteine 893, and histidine 894.

The protein belongs to the SecA family. Monomer and homodimer. Part of the essential Sec protein translocation apparatus which comprises SecA, SecYEG and auxiliary proteins SecDF-YajC and YidC. Requires Zn(2+) as cofactor.

The protein localises to the cell inner membrane. Its subcellular location is the cytoplasm. It carries out the reaction ATP + H2O + cellular proteinSide 1 = ADP + phosphate + cellular proteinSide 2.. Functionally, part of the Sec protein translocase complex. Interacts with the SecYEG preprotein conducting channel. Has a central role in coupling the hydrolysis of ATP to the transfer of proteins into and across the cell membrane, serving both as a receptor for the preprotein-SecB complex and as an ATP-driven molecular motor driving the stepwise translocation of polypeptide chains across the membrane. The sequence is that of Protein translocase subunit SecA from Allorhizobium ampelinum (strain ATCC BAA-846 / DSM 112012 / S4) (Agrobacterium vitis (strain S4)).